The chain runs to 366 residues: Ribosomal RNA large subunit methyltransferase M (366 aa).

S-adenosyl-L-methionine contacts are provided by residues Ser188, 221–224 (CPGG), Asp240, Asp260, and Asp277. Lys306 acts as the Proton acceptor in catalysis.

The protein belongs to the class I-like SAM-binding methyltransferase superfamily. RNA methyltransferase RlmE family. RlmM subfamily. In terms of assembly, monomer.

It localises to the cytoplasm. It carries out the reaction cytidine(2498) in 23S rRNA + S-adenosyl-L-methionine = 2'-O-methylcytidine(2498) in 23S rRNA + S-adenosyl-L-homocysteine + H(+). Catalyzes the 2'-O-methylation at nucleotide C2498 in 23S rRNA. The polypeptide is Ribosomal RNA large subunit methyltransferase M (Escherichia coli O45:K1 (strain S88 / ExPEC)).